The sequence spans 94 residues: Integration host factor subunit beta (94 aa).

This sequence belongs to the bacterial histone-like protein family. In terms of assembly, heterodimer of an alpha and a beta chain.

This protein is one of the two subunits of integration host factor, a specific DNA-binding protein that functions in genetic recombination as well as in transcriptional and translational control. The protein is Integration host factor subunit beta of Vibrio atlanticus (strain LGP32) (Vibrio splendidus (strain Mel32)).